The sequence spans 380 residues: Crotonobetainyl-CoA reductase (380 aa).

Belongs to the acyl-CoA dehydrogenase family. As to quaternary structure, homotetramer. FAD serves as cofactor.

Its subcellular location is the cytoplasm. The enzyme catalyses 4-(trimethylamino)butanoyl-CoA + oxidized [electron-transfer flavoprotein] + H(+) = crotonobetainyl-CoA + reduced [electron-transfer flavoprotein]. It participates in amine and polyamine metabolism; carnitine metabolism. Its function is as follows. Catalyzes the reduction of crotonobetainyl-CoA to gamma-butyrobetainyl-CoA. The polypeptide is Crotonobetainyl-CoA reductase (Salmonella agona (strain SL483)).